The sequence spans 192 residues: dCTP deaminase, dUMP-forming (192 aa).

DCTP is bound by residues K101–R106, D119, T127–E129, Q148, Y162, and Q174. E129 (proton donor/acceptor) is an active-site residue. The interval Y171–R192 is disordered.

The protein belongs to the dCTP deaminase family. In terms of assembly, homotrimer.

The enzyme catalyses dCTP + 2 H2O = dUMP + NH4(+) + diphosphate. It functions in the pathway pyrimidine metabolism; dUMP biosynthesis; dUMP from dCTP: step 1/1. Its function is as follows. Bifunctional enzyme that catalyzes both the deamination of dCTP to dUTP and the hydrolysis of dUTP to dUMP without releasing the toxic dUTP intermediate. The polypeptide is dCTP deaminase, dUMP-forming (Salinispora arenicola (strain CNS-205)).